The following is a 171-amino-acid chain: Lipoprotein signal peptidase (171 aa).

2 helical membrane-spanning segments follow: residues 67-87 and 88-108; these read YALL…LWRS and TSKL…GNAY. Residues D118 and D136 contribute to the active site. Residues 127–147 form a helical membrane-spanning segment; sequence FSWYVFNLADAAIVAGVALLL.

This sequence belongs to the peptidase A8 family.

The protein localises to the cell inner membrane. The enzyme catalyses Release of signal peptides from bacterial membrane prolipoproteins. Hydrolyzes -Xaa-Yaa-Zaa-|-(S,diacylglyceryl)Cys-, in which Xaa is hydrophobic (preferably Leu), and Yaa (Ala or Ser) and Zaa (Gly or Ala) have small, neutral side chains.. Its pathway is protein modification; lipoprotein biosynthesis (signal peptide cleavage). This protein specifically catalyzes the removal of signal peptides from prolipoproteins. This chain is Lipoprotein signal peptidase, found in Methylocella silvestris (strain DSM 15510 / CIP 108128 / LMG 27833 / NCIMB 13906 / BL2).